Here is a 143-residue protein sequence, read N- to C-terminus: Large ribosomal subunit protein eL28z (143 aa).

It belongs to the eukaryotic ribosomal protein eL28 family. As to quaternary structure, component of the large ribosomal subunit. Expressed in seedlings, roots, stems, leaves, inflorescences and siliques.

The protein resides in the cytoplasm. It localises to the nucleus. Its subcellular location is the nucleolus. It is found in the nucleoplasm. Component of the large ribosomal subunit. Essential in leaf polarity establishment, probably having a role for translation in leaf dorsoventral patterning to specify leaf adaxial identity. The chain is Large ribosomal subunit protein eL28z from Arabidopsis thaliana (Mouse-ear cress).